We begin with the raw amino-acid sequence, 206 residues long: Probable chemoreceptor glutamine deamidase CheD 1 (206 aa).

The protein belongs to the CheD family.

The enzyme catalyses L-glutaminyl-[protein] + H2O = L-glutamyl-[protein] + NH4(+). In terms of biological role, probably deamidates glutamine residues to glutamate on methyl-accepting chemotaxis receptors (MCPs), playing an important role in chemotaxis. The sequence is that of Probable chemoreceptor glutamine deamidase CheD 1 from Shewanella oneidensis (strain ATCC 700550 / JCM 31522 / CIP 106686 / LMG 19005 / NCIMB 14063 / MR-1).